The sequence spans 227 residues: 7-cyano-7-deazaguanine synthase (227 aa).

ATP is bound at residue 8 to 18; sequence VSGGADSATVL. Cys192, Cys202, Cys205, and Cys208 together coordinate Zn(2+).

Belongs to the QueC family. The cofactor is Zn(2+).

It catalyses the reaction 7-carboxy-7-deazaguanine + NH4(+) + ATP = 7-cyano-7-deazaguanine + ADP + phosphate + H2O + H(+). Its pathway is purine metabolism; 7-cyano-7-deazaguanine biosynthesis. Its function is as follows. Catalyzes the ATP-dependent conversion of 7-carboxy-7-deazaguanine (CDG) to 7-cyano-7-deazaguanine (preQ(0)). In Rickettsia akari (strain Hartford), this protein is 7-cyano-7-deazaguanine synthase.